The chain runs to 362 residues: Methionine import ATP-binding protein MetN (362 aa).

In terms of domain architecture, ABC transporter spans 2–241 (IHIENLSKTY…PRHEVTRAMV (240 aa)). 38-45 (GPSGAGKS) serves as a coordination point for ATP.

This sequence belongs to the ABC transporter superfamily. Methionine importer (TC 3.A.1.24) family. The complex is composed of two ATP-binding proteins (MetN), two transmembrane proteins (MetI) and a solute-binding protein (MetQ).

It is found in the cell inner membrane. The enzyme catalyses L-methionine(out) + ATP + H2O = L-methionine(in) + ADP + phosphate + H(+). The catalysed reaction is D-methionine(out) + ATP + H2O = D-methionine(in) + ADP + phosphate + H(+). In terms of biological role, part of the ABC transporter complex MetNIQ involved in methionine import. Responsible for energy coupling to the transport system. The sequence is that of Methionine import ATP-binding protein MetN from Bordetella bronchiseptica (strain ATCC BAA-588 / NCTC 13252 / RB50) (Alcaligenes bronchisepticus).